Consider the following 392-residue polypeptide: S-adenosylmethionine synthase (392 aa).

His17 lines the ATP pocket. Residue Asp19 coordinates Mg(2+). A K(+)-binding site is contributed by Glu45. L-methionine contacts are provided by Glu58 and Gln102. The interval 102–112 (QSADIAQGVDA) is flexible loop. ATP is bound by residues 169–171 (DAK), 235–236 (KF), Asp244, 250–251 (RK), Ala267, and Lys271. Asp244 contacts L-methionine. Lys275 contributes to the L-methionine binding site.

This sequence belongs to the AdoMet synthase family. As to quaternary structure, homotetramer; dimer of dimers. The cofactor is Mg(2+). K(+) serves as cofactor.

The protein resides in the cytoplasm. It carries out the reaction L-methionine + ATP + H2O = S-adenosyl-L-methionine + phosphate + diphosphate. It participates in amino-acid biosynthesis; S-adenosyl-L-methionine biosynthesis; S-adenosyl-L-methionine from L-methionine: step 1/1. Its function is as follows. Catalyzes the formation of S-adenosylmethionine (AdoMet) from methionine and ATP. The overall synthetic reaction is composed of two sequential steps, AdoMet formation and the subsequent tripolyphosphate hydrolysis which occurs prior to release of AdoMet from the enzyme. This chain is S-adenosylmethionine synthase, found in Methylobacterium radiotolerans (strain ATCC 27329 / DSM 1819 / JCM 2831 / NBRC 15690 / NCIMB 10815 / 0-1).